We begin with the raw amino-acid sequence, 577 residues long: Acyl-coenzyme A synthetase ACSM2B, mitochondrial (577 aa).

A mitochondrion-targeting transit peptide spans 1-46 (MHWLRKVQGLCTLWGTQMSSRTLYINSRQLVSLQWGHQEVPAKFNF). Q139 is a CoA binding site. ATP-binding positions include 221–229 (TSGTSGLPK), 359–364 (EFYGQT), D446, and R461. Residue T364 coordinates substrate. Position 469 to 471 (469 to 471 (SGY)) interacts with CoA. R472 is a binding site for substrate. R501 serves as a coordination point for CoA. S513 carries the post-translational modification Phosphoserine. CoA contacts are provided by residues K532 and 540-542 (YPR). Residue K557 coordinates ATP.

Belongs to the ATP-dependent AMP-binding enzyme family. In terms of assembly, monomer. The cofactor is Mg(2+). Mn(2+) serves as cofactor. Detected in liver.

It localises to the mitochondrion. It carries out the reaction a medium-chain fatty acid + ATP + CoA = a medium-chain fatty acyl-CoA + AMP + diphosphate. The enzyme catalyses benzoate + ATP + CoA = benzoyl-CoA + AMP + diphosphate. The catalysed reaction is hexanoate + ATP + CoA = hexanoyl-CoA + AMP + diphosphate. It catalyses the reaction butanoate + ATP + CoA = butanoyl-CoA + AMP + diphosphate. It carries out the reaction octanoate + ATP + CoA = octanoyl-CoA + AMP + diphosphate. The enzyme catalyses decanoate + ATP + CoA = decanoyl-CoA + AMP + diphosphate. Its activity is regulated as follows. Activated by monovalent cations, such as potassium, rubidium or ammonium. Its function is as follows. Catalyzes the activation of fatty acids by CoA to produce an acyl-CoA, the first step in fatty acid metabolism. Capable of activating medium-chain fatty acids (e.g. butyric (C4) to decanoic (C10) acids), and certain carboxylate-containing xenobiotics, e.g. benzoate. The sequence is that of Acyl-coenzyme A synthetase ACSM2B, mitochondrial (ACSM2B) from Homo sapiens (Human).